Here is a 246-residue protein sequence, read N- to C-terminus: Small ribosomal subunit protein uS2 (246 aa).

This sequence belongs to the universal ribosomal protein uS2 family.

In Pseudomonas paraeruginosa (strain DSM 24068 / PA7) (Pseudomonas aeruginosa (strain PA7)), this protein is Small ribosomal subunit protein uS2.